The sequence spans 130 residues: uncharacterized protein (130 aa).

This is an uncharacterized protein from Sinorhizobium fredii (strain NBRC 101917 / NGR234).